A 392-amino-acid polypeptide reads, in one-letter code: Putative cystathionine gamma-lyase 2 (392 aa).

The disordered stretch occupies residues 32-55 (LSSTYKQDNPGEPKGHDYSRAGNP). Positions 40 to 50 (NPGEPKGHDYS) are enriched in basic and acidic residues. Residues R51, Y103, and R108 each coordinate substrate. K203 bears the N6-(pyridoxal phosphate)lysine mark. E330 is a binding site for substrate.

It belongs to the trans-sulfuration enzymes family. Pyridoxal 5'-phosphate is required as a cofactor.

The protein resides in the cytoplasm. The enzyme catalyses L,L-cystathionine + H2O = 2-oxobutanoate + L-cysteine + NH4(+). It participates in amino-acid biosynthesis; L-cysteine biosynthesis; L-cysteine from L-homocysteine and L-serine: step 2/2. The polypeptide is Putative cystathionine gamma-lyase 2 (cth-2) (Caenorhabditis elegans).